The primary structure comprises 143 residues: Large ribosomal subunit protein uL11 (143 aa).

This sequence belongs to the universal ribosomal protein uL11 family. Part of the ribosomal stalk of the 50S ribosomal subunit. Interacts with L10 and the large rRNA to form the base of the stalk. L10 forms an elongated spine to which L12 dimers bind in a sequential fashion forming a multimeric L10(L12)X complex. In terms of processing, one or more lysine residues are methylated.

Its function is as follows. Forms part of the ribosomal stalk which helps the ribosome interact with GTP-bound translation factors. The sequence is that of Large ribosomal subunit protein uL11 from Cupriavidus pinatubonensis (strain JMP 134 / LMG 1197) (Cupriavidus necator (strain JMP 134)).